Consider the following 137-residue polypeptide: Small ribosomal subunit protein uS12 (137 aa).

Residues 1–57 are disordered; sequence MPTINQLVRKPRKSKVEKSKSPALNVGYNSHKKVQTNVSSPQKRGVATRVGTMTPKK. Residue Asp102 is modified to 3-methylthioaspartic acid.

This sequence belongs to the universal ribosomal protein uS12 family. As to quaternary structure, part of the 30S ribosomal subunit. Contacts proteins S8 and S17. May interact with IF1 in the 30S initiation complex.

In terms of biological role, with S4 and S5 plays an important role in translational accuracy. Functionally, interacts with and stabilizes bases of the 16S rRNA that are involved in tRNA selection in the A site and with the mRNA backbone. Located at the interface of the 30S and 50S subunits, it traverses the body of the 30S subunit contacting proteins on the other side and probably holding the rRNA structure together. The combined cluster of proteins S8, S12 and S17 appears to hold together the shoulder and platform of the 30S subunit. In Streptococcus pneumoniae serotype 2 (strain D39 / NCTC 7466), this protein is Small ribosomal subunit protein uS12.